The primary structure comprises 166 residues: Alanine racemase (166 aa).

The Proton acceptor; specific for L-alanine role is filled by Tyr-62. Residue Met-110 participates in substrate binding.

The protein belongs to the alanine racemase family. Pyridoxal 5'-phosphate serves as cofactor.

The enzyme catalyses L-alanine = D-alanine. The protein operates within amino-acid biosynthesis; D-alanine biosynthesis; D-alanine from L-alanine: step 1/1. In terms of biological role, catalyzes the interconversion of L-alanine and D-alanine. May also act on other amino acids. This is Alanine racemase (alr) from Piscirickettsia salmonis.